The primary structure comprises 1087 residues: A-kinase anchor protein 9 (1087 aa).

Residues 5–461 adopt a coiled-coil conformation; that stretch reads EVQCQAEKVR…REREKMERIQ (457 aa). The interval 559-572 is PKA-RII subunit binding domain; that stretch reads SLQKVLEEKVAAAL. Positions 614–773 form a coiled coil; the sequence is MESDVSALTW…SEKEDKTEVQ (160 aa). Residues 667–685 show a composition bias toward basic and acidic residues; it reads VQDSETKQRERERQSRLHG. The segment at 667–691 is disordered; sequence VQDSETKQRERERQSRLHGDLGVLE.

Interacts with the regulatory region of protein kinase N (PKN), protein phosphatase 2A (PP2A), protein phosphatase 1 (PP1) and the immature non-phosphorylated form of PKC epsilon. Interacts with CIP4 and FNBP1. Interacts with chloride intracellular channel proteins CLIC1, CLIC4 and CLIC5. CSNK1D binding promotes its centrosomal subcellular location. Interacts with GM130/GOLGA2; leading to recruitment to the Golgi apparatus. Interacts with KCNQ1; targets protein kinase A (PKA) catalytic and regulatory subunits and protein phosphatase 1 (PP1), to the heterodimer KCNQ1-KCNE1. Interacts with PDE4DIP; this interaction stabilizes both proteins. In complex with PDE4DIP, recruits CAMSAP2 to the Golgi apparatus. Forms a pericentrosomal complex with CDK5RAP2, EB1/MAPRE1 and PDE4DIP; within this complex, MAPRE1 binding to CDK5RAP2 may be mediated by PDE4DIP. The interaction with PDE4DIP is isoform-specific. Interacts with MAPRE1 and MAPRE3. Interacts (via C-terminus) with CAMSAP2; this interaction is much stronger in the presence of PDE4DIP. Interacts with CAMSAP3. Interacts (via C-terminus) with the gamma-tubulin ring complex (gamma-TuRC), composed of gamma-tubulin, TUBGCP2, TUBGCP3, TUBGCP4, TUBGCP5 and TUBGCP6. In terms of tissue distribution, highly expressed in gastric parietal cells.

The protein localises to the golgi apparatus. Its subcellular location is the cytoplasm. It is found in the cytoskeleton. It localises to the microtubule organizing center. The protein resides in the centrosome. Its function is as follows. Scaffolding protein that assembles several protein kinases and phosphatases on the centrosome and Golgi apparatus. Required to maintain the integrity of the Golgi apparatus. Required for microtubule nucleation at the cis-side of the Golgi apparatus. Required for association of the centrosomes with the poles of the bipolar mitotic spindle during metaphase. In complex with PDE4DIP, recruits CAMSAP2 to the Golgi apparatus and tethers non-centrosomal minus-end microtubules to the Golgi, an important step for polarized cell movement. In complex with PDE4DIP, EB1/MAPRE1 and CDK5RAP2, contributes to microtubules nucleation and extension also from the centrosome to the cell periphery. The interaction with PDE4DIP is isoform-specific. The chain is A-kinase anchor protein 9 (AKAP9) from Oryctolagus cuniculus (Rabbit).